A 223-amino-acid polypeptide reads, in one-letter code: MKTNKKISKRRSLKNLHGALKGLLKESGKKSESKIRKHSDCNPVHRVYPPNIEKRKTKKDDGISRPIAERNGHVYIMSKENHIIPKLTDDEVMERHKLADENMRKVWSNIISKYESIEEQGDLVDLKTGEIVEDNGHIKTLTANNSTKDKRTKYTSVLRDIIDISDEEDGDKNDEYTLWANDSEASDSEVDADNDTEEEKDEKLIDADFKKYEAKLSKRILRD.

The segment covering 1-14 has biased composition (basic residues); that stretch reads MKTNKKISKRRSLK. Disordered regions lie at residues 1–48 and 168–202; these read MKTN…HRVY and EDGD…EKDE. Basic and acidic residues predominate over residues 23–40; the sequence is LLKESGKKSESKIRKHSD. Over residues 184 to 200 the composition is skewed to acidic residues; that stretch reads EASDSEVDADNDTEEEK.

As to quaternary structure, interacts with YTA7.

It is found in the nucleus. In terms of biological role, centromeric protein that plays a central role in the incorporation and maintenance of histone H3-like variant CENPA at centromeres. The sequence is that of Protein SCM3 (SCM3) from Saccharomyces cerevisiae (strain ATCC 204508 / S288c) (Baker's yeast).